The following is a 148-amino-acid chain: Glutamyl-tRNA(Gln) amidotransferase subunit C, mitochondrial (148 aa).

The protein belongs to the GatC family. Subunit of the heterotrimeric GatCAB amidotransferase (AdT) complex, composed of A, B and C subunits.

The protein localises to the mitochondrion. The catalysed reaction is L-glutamyl-tRNA(Gln) + L-glutamine + ATP + H2O = L-glutaminyl-tRNA(Gln) + L-glutamate + ADP + phosphate + H(+). Allows the formation of correctly charged Gln-tRNA(Gln) through the transamidation of misacylated Glu-tRNA(Gln) in the mitochondria. The reaction takes place in the presence of glutamine and ATP through an activated gamma-phospho-Glu-tRNA(Gln). This is Glutamyl-tRNA(Gln) amidotransferase subunit C, mitochondrial from Drosophila melanogaster (Fruit fly).